Reading from the N-terminus, the 605-residue chain is Replication and transcription activator (605 aa).

Disordered regions lie at residues 307 to 380 (SLPS…AEPE) and 447 to 499 (RIRP…AVTP). Low complexity predominate over residues 321–338 (SADCGDSSSSSSDSGNSD). The segment covering 341-353 (QSEREEARAEAPR) has biased composition (basic and acidic residues). The segment covering 355 to 364 (RAPKSRRTSR) has biased composition (basic residues).

This sequence belongs to the herpesviridae Rta family. In terms of assembly, interacts with human ATF7IP protein, leading to promote and regulate host genes in virus-infected cells. Interacts with RNA polymerase III complex; this interaction downregulates small RNA transcription and 5'-pppRNA production.

The protein localises to the host nucleus. It localises to the virion tegument. Immediate-early transcription factor that controls the initiation of viral lytic gene expression and lytic reactivation from latency. Triggers lytic replication, and initiates a cellular senescence program in epithelial cells. Up-regulates human DCR3/TNFRSF6B by directly binding to its receptor. Globally induces a proteasome-dependent loss of SUMOylated proteins in the host cell and the loss of promeylocytic leukemia nuclear bodies. Improves the stability of the triplex capsid protein TRX1 by reducing the ubiquitination level of the latter. Mediates evasion of inflammasome activation and antiviral responses (T- and NK cell activation) during EBV early lytic infection. The polypeptide is Replication and transcription activator (Epstein-Barr virus (strain B95-8) (HHV-4)).